The sequence spans 82 residues: Consomatin Ro2 (82 aa).

Residues M1 to G22 form the signal peptide. The propeptide occupies G23 to R57. C62 and C68 are joined by a disulfide. The residue at position 64 (W64) is a D-tryptophan. 2 positions are modified to 4-hydroxyproline: P69 and P70. Positions L72–D82 are excised as a propeptide.

This sequence belongs to the conotoxin C superfamily. Consomatin family. Expressed by the venom duct.

It is found in the secreted. Functionally, moderately activates human somatostatin receptors (SSTR) with a preferential activation of SSTR1 and SSTR4. In vivo, does not cause behavioral changes in mice within a few minutes of intracranial injection, but causes a progressive loss of movement thereafter. Four to five hours after injection, mice recover, even with the highest dose tested. Shows antinociception and antihyperalgesia activities in two mouse models of acute pain, most probably by acting outside the central nervous system. This chain is Consomatin Ro2, found in Conus rolani (Cone snail).